A 473-amino-acid chain; its full sequence is GTPase Der (473 aa).

2 consecutive EngA-type G domains span residues 3 to 167 (LTIA…GKDK) and 204 to 379 (IRIA…RIWN). GTP-binding positions include 9–16 (GRPNVGKS), 56–60 (DTAGL), 119–122 (NKSE), 210–217 (GRPNTGKS), 257–261 (DTAGL), and 322–325 (NKWD). The 85-residue stretch at 380–464 (RRISTGKLNR…PIRLSLRTSD (85 aa)) folds into the KH-like domain.

This sequence belongs to the TRAFAC class TrmE-Era-EngA-EngB-Septin-like GTPase superfamily. EngA (Der) GTPase family. Associates with the 50S ribosomal subunit.

In terms of biological role, GTPase that plays an essential role in the late steps of ribosome biogenesis. This is GTPase Der from Bartonella bacilliformis (strain ATCC 35685 / KC583 / Herrer 020/F12,63).